Consider the following 298-residue polypeptide: Probable 2-(5''-triphosphoribosyl)-3'-dephosphocoenzyme-A synthase 2 (298 aa).

It belongs to the CitG/MdcB family.

The catalysed reaction is 3'-dephospho-CoA + ATP = 2'-(5''-triphospho-alpha-D-ribosyl)-3'-dephospho-CoA + adenine. The chain is Probable 2-(5''-triphosphoribosyl)-3'-dephosphocoenzyme-A synthase 2 from Salmonella choleraesuis (strain SC-B67).